We begin with the raw amino-acid sequence, 106 residues long: Large ribosomal subunit protein uL24 (106 aa).

Belongs to the universal ribosomal protein uL24 family. Part of the 50S ribosomal subunit.

In terms of biological role, one of two assembly initiator proteins, it binds directly to the 5'-end of the 23S rRNA, where it nucleates assembly of the 50S subunit. One of the proteins that surrounds the polypeptide exit tunnel on the outside of the subunit. In Bordetella bronchiseptica (strain ATCC BAA-588 / NCTC 13252 / RB50) (Alcaligenes bronchisepticus), this protein is Large ribosomal subunit protein uL24.